A 290-amino-acid chain; its full sequence is Acetyl-coenzyme A carboxylase carboxyl transferase subunit beta (290 aa).

The region spanning 27-290 (LWHKCPSCEA…FTHSPSPVSA (264 aa)) is the CoA carboxyltransferase N-terminal domain. Residues Cys31, Cys34, Cys50, and Cys53 each contribute to the Zn(2+) site. Residues 31-53 (CPSCEAVLYRPELEKTLDVCPKC) form a C4-type zinc finger.

The protein belongs to the AccD/PCCB family. As to quaternary structure, acetyl-CoA carboxylase is a heterohexamer composed of biotin carboxyl carrier protein (AccB), biotin carboxylase (AccC) and two subunits each of ACCase subunit alpha (AccA) and ACCase subunit beta (AccD). Zn(2+) is required as a cofactor.

It is found in the cytoplasm. It catalyses the reaction N(6)-carboxybiotinyl-L-lysyl-[protein] + acetyl-CoA = N(6)-biotinyl-L-lysyl-[protein] + malonyl-CoA. It participates in lipid metabolism; malonyl-CoA biosynthesis; malonyl-CoA from acetyl-CoA: step 1/1. Functionally, component of the acetyl coenzyme A carboxylase (ACC) complex. Biotin carboxylase (BC) catalyzes the carboxylation of biotin on its carrier protein (BCCP) and then the CO(2) group is transferred by the transcarboxylase to acetyl-CoA to form malonyl-CoA. This is Acetyl-coenzyme A carboxylase carboxyl transferase subunit beta from Pseudomonas aeruginosa (strain UCBPP-PA14).